We begin with the raw amino-acid sequence, 529 residues long: Arginine--tRNA ligase (529 aa).

A 'HIGH' region motif is present at residues 113-123 (ANPTGPLHIGH).

Belongs to the class-I aminoacyl-tRNA synthetase family. Monomer.

Its subcellular location is the cytoplasm. It carries out the reaction tRNA(Arg) + L-arginine + ATP = L-arginyl-tRNA(Arg) + AMP + diphosphate. The protein is Arginine--tRNA ligase of Aliarcobacter butzleri (strain RM4018) (Arcobacter butzleri).